The sequence spans 482 residues: MASRTTPSRSTPSRSTPSGSSSGGRTRVGKYELGRTLGEGTFAKVKFARNVENGDNVAIKVIDKEKVLKNKMIAQIKREISTMKLIKHPNVIRMFEVMASKTKIYFVLEFVTGGELFDKISSNGRLKEDEARKYFQQLINAVDYCHSRGVYHRDLKPENLLLDANGALKVSDFGLSALPQQVREDGLLHTTCGTPNYVAPEVINNKGYDGAKADLWSCGVILFVLMAGYLPFEDSNLTSLYKKIFKAEFTCPPWFSASAKKLIKRILDPNPATRITFAEVIENEWFKKGYKAPKFENADVSLDDVDAIFDDSGESKNLVVERREEGLKTPVTMNAFELISTSQGLNLGSLFEKQMGLVKRKTRFTSKSSANEIVTKIEAAAAPMGFDVKTNNYKMKLTGEKSGRKGQLAVATEVFQVAPSLYMVEMRKSGGDTLEFHKFYKNLTTGLKDIVWKTIDEEKEEGTDGGGTNGAMANRTIAKQST.

The span at 1–25 shows a compositional bias: low complexity; sequence MASRTTPSRSTPSRSTPSGSSSGGR. Residues 1–29 form a disordered region; it reads MASRTTPSRSTPSRSTPSGSSSGGRTRVG. In terms of domain architecture, Protein kinase spans 31 to 286; the sequence is YELGRTLGEG…FAEVIENEWF (256 aa). ATP contacts are provided by residues 37–45 and Lys-60; that span reads LGEGTFAKV. Asp-154 acts as the Proton acceptor in catalysis. The activation loop stretch occupies residues 172 to 201; it reads DFGLSALPQQVREDGLLHTTCGTPNYVAPE. Residue Ser-176 is modified to Phosphoserine. Phosphothreonine is present on Thr-190. Residues 328–352 enclose the NAF domain; it reads KTPVTMNAFELISTSQGLNLGSLFE. Residues 359-388 form a PPI region; it reads KRKTRFTSKSSANEIVTKIEAAAAPMGFDV. The segment at 459-482 is disordered; sequence KEEGTDGGGTNGAMANRTIAKQST.

The protein belongs to the protein kinase superfamily. CAMK Ser/Thr protein kinase family. SNF1 subfamily. Part of a K(+)-channel calcium-sensing kinase/phosphatase complex composed by a calcium sensor CBL (CBL1, CBL2, CBL3 or CBL9), a kinase CIPK (CIPK6, CIPK16 or CIPK23), a phosphatase PP2C (AIP1) and a K(+)-channel (AKT1). Interacts with AKT1, CBL1, CBL2, CBL3, CBL5, CBL8, CBL9 and NRT1.1. Mn(2+) is required as a cofactor. Autophosphorylated. As to expression, in seedlings, mostly in vascular bundles, and in roots, especially in cortex and endodermis cells. In adult plants, mostly expressed in flowers, and, to a lower extent, in roots, leaves, stems and siliques, particularly in vascular tissues. Also detected in guard cells and root hairs.

Its subcellular location is the cell membrane. It carries out the reaction L-seryl-[protein] + ATP = O-phospho-L-seryl-[protein] + ADP + H(+). The enzyme catalyses L-threonyl-[protein] + ATP = O-phospho-L-threonyl-[protein] + ADP + H(+). Functionally, CIPK serine-threonine protein kinases interact with CBL proteins. Binding of a CBL protein to the regulatory NAF domain of CIPK protein leads to activation of the kinase in a calcium-dependent manner. Downstream of CBL1, CBL2, CBL3 and CBL9, regulates by phosphorylation the K(+) conductance and uptake of AKT1 in low K(+) condition, in response to calcium signaling and during the stomatal opening regulation by monitoring the turgor pressure in guard cells. In response to low nitrate concentration, phosphorylates NRT1.1, switching it from a low-affinity nitrate transporter to a high-affinity transporter. Confers tolerance to low potassium conditions. Involved in drought sensitivity and leaf transpiration. This chain is CBL-interacting serine/threonine-protein kinase 23 (CIPK23), found in Arabidopsis thaliana (Mouse-ear cress).